We begin with the raw amino-acid sequence, 217 residues long: Superoxide dismutase [Cu-Zn], chloroplastic (217 aa).

A chloroplast-targeting transit peptide spans 1–63 (MAAHSIFTTT…TTPKPLTVFA (63 aa)). His109, His111, and His126 together coordinate Cu cation. Cys120 and Cys209 are oxidised to a cystine. The Zn(2+) site is built by His126, His134, His143, and Asp146. Position 183 (His183) interacts with Cu cation.

It belongs to the Cu-Zn superoxide dismutase family. As to quaternary structure, homotetramer. Requires Cu cation as cofactor. Zn(2+) is required as a cofactor.

Its subcellular location is the plastid. It localises to the chloroplast. The enzyme catalyses 2 superoxide + 2 H(+) = H2O2 + O2. Its function is as follows. Destroys radicals which are normally produced within the cells and which are toxic to biological systems. This chain is Superoxide dismutase [Cu-Zn], chloroplastic (SODCP.2), found in Solanum lycopersicum (Tomato).